The primary structure comprises 239 residues: Exosome complex component Rrp41 (239 aa).

Positions 1 to 21 (MEERPERLISEDGLRLDGRKP) are disordered.

This sequence belongs to the RNase PH family. Rrp41 subfamily. Component of the archaeal exosome complex. Forms a hexameric ring-like arrangement composed of 3 Rrp41-Rrp42 heterodimers. The hexameric ring associates with a trimer of Rrp4 and/or Csl4 subunits.

It localises to the cytoplasm. Catalytic component of the exosome, which is a complex involved in RNA degradation. Has 3'-&gt;5' exoribonuclease activity. Can also synthesize heteromeric RNA-tails. In Methanopyrus kandleri (strain AV19 / DSM 6324 / JCM 9639 / NBRC 100938), this protein is Exosome complex component Rrp41.